The following is a 963-amino-acid chain: Ubiquitin carboxyl-terminal hydrolase 11 (963 aa).

Residues 64 to 93 (VTEDREPQHEELPGLDSQWRQIENGESGRE) form a disordered region. Over residues 65–75 (TEDREPQHEEL) the composition is skewed to basic and acidic residues. The 109-residue stretch at 76-184 (PGLDSQWRQI…GQPPIERKVI (109 aa)) folds into the DUSP domain. An N6-acetyllysine modification is found at lysine 245. Residues 309–930 (CGLTNLGNTC…AAYVLFYQRQ (622 aa)) form the USP domain. The active-site Nucleophile is cysteine 318. 2 disordered regions span residues 644–691 (TKPN…SGVT) and 716–735 (LFTLQTVNSNGTSDRTTSPE). At serine 648 the chain carries Phosphoserine. The segment covering 649 to 665 (DDEDDGDEKEDDEEDKD) has biased composition (acidic residues). Residues 717–731 (FTLQTVNSNGTSDRT) show a composition bias toward polar residues. The residue at position 733 (serine 733) is a Phosphoserine. The active-site Proton acceptor is the histidine 888. A compositionally biased stretch (low complexity) spans 938-957 (SPAGSSGAPASPACSSPPSS). Positions 938–963 (SPAGSSGAPASPACSSPPSSEFMDVN) are disordered. At serine 948 the chain carries Phosphoserine.

It belongs to the peptidase C19 family. As to quaternary structure, monomer. Associated component of the Polycomb group (PcG) multiprotein PRC1-like complex. Interacts with RANBP9/RANBPM. Interacts with BRCA2. Interacts with CHUK/IKKA. Interacts with NFKBIA. Interacts with SPRY3, RAE1, MYCBP2/PAM, and KCTD6. In terms of assembly, (Microbial infection) Interacts with papilloma virus protein 16E7.

The protein localises to the nucleus. It is found in the cytoplasm. It localises to the chromosome. The catalysed reaction is Thiol-dependent hydrolysis of ester, thioester, amide, peptide and isopeptide bonds formed by the C-terminal Gly of ubiquitin (a 76-residue protein attached to proteins as an intracellular targeting signal).. Functionally, protease that can remove conjugated ubiquitin from target proteins and polyubiquitin chains. Inhibits the degradation of target proteins by the proteasome. Cleaves preferentially 'Lys-6' and 'Lys-63'-linked ubiquitin chains. Has lower activity with 'Lys-11' and 'Lys-33'-linked ubiquitin chains, and extremely low activity with 'Lys-27', 'Lys-29' and 'Lys-48'-linked ubiquitin chains (in vitro). Plays a role in the regulation of pathways leading to NF-kappa-B activation. Plays a role in the regulation of DNA repair after double-stranded DNA breaks. Acts as a chromatin regulator via its association with the Polycomb group (PcG) multiprotein PRC1-like complex; may act by deubiquitinating components of the PRC1-like complex. Promotes cell proliferation by deubiquitinating phosphorylated E2F1. The sequence is that of Ubiquitin carboxyl-terminal hydrolase 11 (USP11) from Homo sapiens (Human).